The chain runs to 352 residues: Elongation factor Tu, mitochondrial (352 aa).

Residues 45–241 form the tr-type G domain; that stretch reads RPHVNVGTIG…AIDTHIPLPH (197 aa). Positions 54 to 61 are G1; that stretch reads GHVDHGKT. Positions 57, 59, 60, 61, and 62 each coordinate GTP. Residue Thr-61 coordinates Mg(2+). The G2 stretch occupies residues 95 to 99; that stretch reads GITIN. Residues 116–119 are G3; it reads DCPG. Residues Asn-171, Asp-174, Ser-209, Ala-210, and Leu-211 each contribute to the GTP site. The interval 171-174 is G4; the sequence is NKAD. Residues 209–211 are G5; that stretch reads SAL.

The protein localises to the mitochondrion. The catalysed reaction is GTP + H2O = GDP + phosphate + H(+). Functionally, GTP hydrolase that promotes the GTP-dependent binding of aminoacyl-tRNA to the A-site of ribosomes during protein biosynthesis. This chain is Elongation factor Tu, mitochondrial, found in Gallus gallus (Chicken).